Here is a 301-residue protein sequence, read N- to C-terminus: D-alanine--D-alanine ligase A (301 aa).

The ATP-grasp domain occupies K99–E293. Position 126–181 (I126–T181) interacts with ATP. The Mg(2+) site is built by D248, E260, and N262.

The protein belongs to the D-alanine--D-alanine ligase family. Mg(2+) is required as a cofactor. Requires Mn(2+) as cofactor.

It is found in the cytoplasm. The catalysed reaction is 2 D-alanine + ATP = D-alanyl-D-alanine + ADP + phosphate + H(+). It functions in the pathway cell wall biogenesis; peptidoglycan biosynthesis. Its function is as follows. Cell wall formation. This chain is D-alanine--D-alanine ligase A, found in Clostridium perfringens (strain 13 / Type A).